A 385-amino-acid polypeptide reads, in one-letter code: Chaperone protein DnaJ 2 (385 aa).

A J domain is found at 10–75 (DYYKELGVSS…AKRKEYDETR (66 aa)). The CR-type zinc-finger motif lies at 155 to 233 (GVTVPLRMTS…CHGSGIQNRT (79 aa)). The Zn(2+) site is built by Cys168, Cys171, Cys185, Cys188, Cys207, Cys210, Cys221, and Cys224. CXXCXGXG motif repeat units follow at residues 168 to 175 (CTTCHGSG), 185 to 192 (CPICNGTG), 207 to 214 (CDGCRGTG), and 221 to 228 (CVDCHGSG).

Belongs to the DnaJ family. Homodimer. It depends on Zn(2+) as a cofactor.

It localises to the cytoplasm. Its function is as follows. Participates actively in the response to hyperosmotic and heat shock by preventing the aggregation of stress-denatured proteins and by disaggregating proteins, also in an autonomous, DnaK-independent fashion. Unfolded proteins bind initially to DnaJ; upon interaction with the DnaJ-bound protein, DnaK hydrolyzes its bound ATP, resulting in the formation of a stable complex. GrpE releases ADP from DnaK; ATP binding to DnaK triggers the release of the substrate protein, thus completing the reaction cycle. Several rounds of ATP-dependent interactions between DnaJ, DnaK and GrpE are required for fully efficient folding. Also involved, together with DnaK and GrpE, in the DNA replication of plasmids through activation of initiation proteins. The sequence is that of Chaperone protein DnaJ 2 from Nocardia farcinica (strain IFM 10152).